The sequence spans 261 residues: MASRAAPVRQTCCCFNIRVATIALAIYHIVMSVLLFIEHVVEVARGKVSCRFFKMPYLRMADLLSSFLLIGVLFIISISLLFGVVKNREKYLIPFLSLQIMDFLLCLLTLLGSYIELPAYLKLARPRPGPSKVPLMTLQLLDFCLSILTLCSSYMEVPTYLNFKSMNHMNYLPSQEGVPHSQFINMMLIFSVAFITVLILKVYMFKCVYTCYKFLKHMNSAMEDSSSKMFLKVALPSYEEALSLPPKTPEGDPAPPPYSEV.

Helical transmembrane passes span 21-41, 65-85, 92-112, 133-153, and 183-203; these read TIAL…EHVV, SSFL…FGVV, LIPF…TLLG, VPLM…LCSS, and FINM…LKVY. Positions 242-261 are disordered; it reads LSLPPKTPEGDPAPPPYSEV. A compositionally biased stretch (pro residues) spans 246–261; the sequence is PKTPEGDPAPPPYSEV. The residue at position 258 (Y258) is a Phosphotyrosine.

Belongs to the LAPTM4/LAPTM5 transporter family. In terms of assembly, binds to ubiquitin. In terms of tissue distribution, preferentially expressed in adult hematopoietic tissues. High levels in lymphoid and myeloid tissues.

The protein localises to the lysosome membrane. May have a special functional role during embryogenesis and in adult hematopoietic cells. The chain is Lysosomal-associated transmembrane protein 5 (Laptm5) from Mus musculus (Mouse).